Consider the following 435-residue polypeptide: Eukaryotic translation initiation factor 3 subunit E (435 aa).

The PCI domain maps to 219–392 (FFNHAKGRDL…GHVVMGTQPL (174 aa)).

The protein belongs to the eIF-3 subunit E family. As to quaternary structure, component of the eukaryotic translation initiation factor 3 (eIF-3) complex.

The protein localises to the cytoplasm. Component of the eukaryotic translation initiation factor 3 (eIF-3) complex, which is involved in protein synthesis of a specialized repertoire of mRNAs and, together with other initiation factors, stimulates binding of mRNA and methionyl-tRNAi to the 40S ribosome. The eIF-3 complex specifically targets and initiates translation of a subset of mRNAs involved in cell proliferation. This is Eukaryotic translation initiation factor 3 subunit E (eIF3-S6) from Aedes aegypti (Yellowfever mosquito).